The following is a 316-amino-acid chain: MTDKPTLHPRNRHQGRYDFPALIKAHPDLARFTITNPYGKPSIDFANPEAVRVFNRALLKAQYGVQHWDIPADYLCPPIPGRADYIHVLADLLAEDNAGDVPRGAQVRALDIGVGANCIYPLLGHSDYRWRFLGSDIDTTALASAKAIVQANKLDKAIGLRQQTQPKHILAGLLQADERFDVTLCNPPFHASREEATRGSQRKWKNLGKQDPKRKLPVLNFGGQNNELWCEGGEIRFVSQLVGESVQYAEQVLWFTSLVSKASNLPGIEAALKKAGVKALRIVEMGQGQKQSRMVAWSFHDDAARQAWHARRKSQA.

Belongs to the methyltransferase superfamily. METTL16/RlmF family.

Its subcellular location is the cytoplasm. The enzyme catalyses adenosine(1618) in 23S rRNA + S-adenosyl-L-methionine = N(6)-methyladenosine(1618) in 23S rRNA + S-adenosyl-L-homocysteine + H(+). Specifically methylates the adenine in position 1618 of 23S rRNA. The chain is Ribosomal RNA large subunit methyltransferase F from Pseudomonas entomophila (strain L48).